Reading from the N-terminus, the 194-residue chain is A-type ATP synthase subunit E (194 aa).

The protein belongs to the V-ATPase E subunit family. In terms of assembly, has multiple subunits with at least A(3), B(3), C, D, E, F, H, I and proteolipid K(x).

The protein localises to the cell membrane. Its function is as follows. Component of the A-type ATP synthase that produces ATP from ADP in the presence of a proton gradient across the membrane. In Saccharolobus islandicus (strain Y.N.15.51 / Yellowstone #2) (Sulfolobus islandicus), this protein is A-type ATP synthase subunit E.